A 151-amino-acid polypeptide reads, in one-letter code: Deoxyuridine 5'-triphosphate nucleotidohydrolase (151 aa).

Substrate-binding positions include 69–71, N82, and 86–88; these read RSG and TID.

This sequence belongs to the dUTPase family. It depends on Mg(2+) as a cofactor.

It catalyses the reaction dUTP + H2O = dUMP + diphosphate + H(+). Its pathway is pyrimidine metabolism; dUMP biosynthesis; dUMP from dCTP (dUTP route): step 2/2. This enzyme is involved in nucleotide metabolism: it produces dUMP, the immediate precursor of thymidine nucleotides and it decreases the intracellular concentration of dUTP so that uracil cannot be incorporated into DNA. The polypeptide is Deoxyuridine 5'-triphosphate nucleotidohydrolase (Rhodospirillum centenum (strain ATCC 51521 / SW)).